Here is a 614-residue protein sequence, read N- to C-terminus: Putative ABC transporter ATP-binding protein MA_1747 (614 aa).

2 ABC transporter domains span residues 11–251 and 319–552; these read VRLE…KLGI and VLIE…AGLL. Residues 45–52 and 352–359 contribute to the ATP site; these read GPSGCGKS and GHNGAGKT.

It belongs to the ABC transporter superfamily.

The protein localises to the cell membrane. Probably part of an ABC transporter complex. Responsible for energy coupling to the transport system. This is Putative ABC transporter ATP-binding protein MA_1747 from Methanosarcina acetivorans (strain ATCC 35395 / DSM 2834 / JCM 12185 / C2A).